The sequence spans 152 residues: Endoribonuclease YbeY (152 aa).

Zn(2+) is bound by residues His-113, His-117, and His-123.

Belongs to the endoribonuclease YbeY family. Zn(2+) serves as cofactor.

The protein resides in the cytoplasm. In terms of biological role, single strand-specific metallo-endoribonuclease involved in late-stage 70S ribosome quality control and in maturation of the 3' terminus of the 16S rRNA. This chain is Endoribonuclease YbeY, found in Acidovorax ebreus (strain TPSY) (Diaphorobacter sp. (strain TPSY)).